A 179-amino-acid polypeptide reads, in one-letter code: Large ribosomal subunit protein uL5 (179 aa).

This sequence belongs to the universal ribosomal protein uL5 family. In terms of assembly, part of the 50S ribosomal subunit; part of the 5S rRNA/L5/L18/L25 subcomplex. Contacts the 5S rRNA and the P site tRNA. Forms a bridge to the 30S subunit in the 70S ribosome.

This is one of the proteins that bind and probably mediate the attachment of the 5S RNA into the large ribosomal subunit, where it forms part of the central protuberance. In the 70S ribosome it contacts protein S13 of the 30S subunit (bridge B1b), connecting the 2 subunits; this bridge is implicated in subunit movement. Contacts the P site tRNA; the 5S rRNA and some of its associated proteins might help stabilize positioning of ribosome-bound tRNAs. The protein is Large ribosomal subunit protein uL5 of Dehalococcoides mccartyi (strain ATCC BAA-2266 / KCTC 15142 / 195) (Dehalococcoides ethenogenes (strain 195)).